Here is a 269-residue protein sequence, read N- to C-terminus: 4-hydroxy-tetrahydrodipicolinate reductase (269 aa).

Residues 10 to 15 (GSSGRM) and Glu36 each bind NAD(+). Residue Arg37 participates in NADP(+) binding. Residues 99-101 (GTT) and 123-126 (APNM) contribute to the NAD(+) site. The Proton donor/acceptor role is filled by His156. Residue His157 coordinates (S)-2,3,4,5-tetrahydrodipicolinate. Residue Lys160 is the Proton donor of the active site. 166 to 167 (GT) contacts (S)-2,3,4,5-tetrahydrodipicolinate.

Belongs to the DapB family.

The protein localises to the cytoplasm. The catalysed reaction is (S)-2,3,4,5-tetrahydrodipicolinate + NAD(+) + H2O = (2S,4S)-4-hydroxy-2,3,4,5-tetrahydrodipicolinate + NADH + H(+). It catalyses the reaction (S)-2,3,4,5-tetrahydrodipicolinate + NADP(+) + H2O = (2S,4S)-4-hydroxy-2,3,4,5-tetrahydrodipicolinate + NADPH + H(+). It participates in amino-acid biosynthesis; L-lysine biosynthesis via DAP pathway; (S)-tetrahydrodipicolinate from L-aspartate: step 4/4. Its function is as follows. Catalyzes the conversion of 4-hydroxy-tetrahydrodipicolinate (HTPA) to tetrahydrodipicolinate. The protein is 4-hydroxy-tetrahydrodipicolinate reductase of Nitrosospira multiformis (strain ATCC 25196 / NCIMB 11849 / C 71).